Reading from the N-terminus, the 40-residue chain is Large ribosomal subunit protein bL36A (40 aa).

Belongs to the bacterial ribosomal protein bL36 family.

This chain is Large ribosomal subunit protein bL36A, found in Renibacterium salmoninarum (strain ATCC 33209 / DSM 20767 / JCM 11484 / NBRC 15589 / NCIMB 2235).